The primary structure comprises 476 residues: Small ribosomal subunit protein mS29 (476 aa).

The N-terminal 54 residues, M1–Y54, are a transit peptide targeting the mitochondrion. The tract at residues G58–T97 is disordered. Polar residues-rich tracts occupy residues I65–Q74 and P86–T97. G200–S207 provides a ligand contact to ATP.

Belongs to the mitochondrion-specific ribosomal protein mS29 family. In terms of assembly, component of the mitochondrial small ribosomal subunit (mt-SSU). Mature yeast 74S mitochondrial ribosomes consist of a small (37S) and a large (54S) subunit. The 37S small subunit contains a 15S ribosomal RNA (15S mt-rRNA) and at least 32 different proteins. The 54S large subunit contains a 21S rRNA (21S mt-rRNA) and at least 45 different proteins.

It localises to the mitochondrion. Component of the mitochondrial ribosome (mitoribosome), a dedicated translation machinery responsible for the synthesis of mitochondrial genome-encoded proteins, including at least some of the essential transmembrane subunits of the mitochondrial respiratory chain. The mitoribosomes are attached to the mitochondrial inner membrane and translation products are cotranslationally integrated into the membrane. mS29 binds GTP and is probably an active GTPase. GTP hydrolysis may be linked to subunit association. mS29 also has an extraribosomal function, being required for maintenance of mitochondrial DNA. This is Small ribosomal subunit protein mS29 (rsm23) from Schizosaccharomyces pombe (strain 972 / ATCC 24843) (Fission yeast).